Here is a 218-residue protein sequence, read N- to C-terminus: Adenylate kinase (218 aa).

10–15 (GAGKGT) is an ATP binding site. The segment at 30 to 59 (STGDMLRAAVKEGSELGLKVKEIMNSGGLV) is NMP. Residues threonine 31, arginine 36, 57-59 (GLV), 85-88 (GFPR), and glutamine 92 each bind AMP. Residues 122 to 159 (GRRVHPGSGRVYHVDYNPPKEEGKDDVTGEALIQRDDD) are LID. ATP-binding positions include arginine 123 and 132–133 (VY). Arginine 156 and arginine 167 together coordinate AMP. Glycine 203 is a binding site for ATP.

Belongs to the adenylate kinase family. In terms of assembly, monomer.

It is found in the cytoplasm. It catalyses the reaction AMP + ATP = 2 ADP. It participates in purine metabolism; AMP biosynthesis via salvage pathway; AMP from ADP: step 1/1. Catalyzes the reversible transfer of the terminal phosphate group between ATP and AMP. Plays an important role in cellular energy homeostasis and in adenine nucleotide metabolism. The polypeptide is Adenylate kinase (Chromohalobacter salexigens (strain ATCC BAA-138 / DSM 3043 / CIP 106854 / NCIMB 13768 / 1H11)).